Reading from the N-terminus, the 363-residue chain is Probable auxin efflux carrier component 5a (363 aa).

10 helical membrane passes run 7 to 27 (VYKV…GYGS), 39 to 59 (CDAV…FEFT), 72 to 92 (VAAD…WARF), 103 to 123 (SITS…VPMA), 134 to 154 (LVVQ…LFVL), 222 to 242 (FVGI…PSAF), 246 to 266 (VLIM…LFMA), 281 to 301 (LGLV…SIAV), 307 to 327 (VLRV…FIFA), and 342 to 362 (IFGM…LELI).

Belongs to the auxin efflux carrier (TC 2.A.69.1) family. In terms of tissue distribution, expressed in leaves, shoot apex and panicles. Expressed in roots, stem bases, stems, leaves and young panicles.

It is found in the membrane. Its function is as follows. May act as a component of the auxin efflux carrier. This chain is Probable auxin efflux carrier component 5a, found in Oryza sativa subsp. japonica (Rice).